The chain runs to 564 residues: Proline--tRNA ligase (564 aa).

The protein belongs to the class-II aminoacyl-tRNA synthetase family. ProS type 1 subfamily. In terms of assembly, homodimer.

The protein localises to the cytoplasm. It carries out the reaction tRNA(Pro) + L-proline + ATP = L-prolyl-tRNA(Pro) + AMP + diphosphate. Catalyzes the attachment of proline to tRNA(Pro) in a two-step reaction: proline is first activated by ATP to form Pro-AMP and then transferred to the acceptor end of tRNA(Pro). As ProRS can inadvertently accommodate and process non-cognate amino acids such as alanine and cysteine, to avoid such errors it has two additional distinct editing activities against alanine. One activity is designated as 'pretransfer' editing and involves the tRNA(Pro)-independent hydrolysis of activated Ala-AMP. The other activity is designated 'posttransfer' editing and involves deacylation of mischarged Ala-tRNA(Pro). The misacylated Cys-tRNA(Pro) is not edited by ProRS. The chain is Proline--tRNA ligase from Xanthomonas oryzae pv. oryzae (strain KACC10331 / KXO85).